The chain runs to 182 residues: Ribosome maturation factor RimM (182 aa).

One can recognise a PRC barrel domain in the interval 103–182 (GDDYYWKDLM…VIEADWDPGF (80 aa)).

Belongs to the RimM family. As to quaternary structure, binds ribosomal protein uS19.

It is found in the cytoplasm. In terms of biological role, an accessory protein needed during the final step in the assembly of 30S ribosomal subunit, possibly for assembly of the head region. Essential for efficient processing of 16S rRNA. May be needed both before and after RbfA during the maturation of 16S rRNA. It has affinity for free ribosomal 30S subunits but not for 70S ribosomes. The protein is Ribosome maturation factor RimM of Serratia proteamaculans (strain 568).